Reading from the N-terminus, the 216-residue chain is Protein fmp32, mitochondrial (216 aa).

Residues 111–133 (RQEMVALHSQVEQLFSDVERLKT) adopt a coiled-coil conformation. The chain crosses the membrane as a helical span at residues 193-215 (TLQWVFGIVTGSGALLLAYVRLI).

The protein belongs to the CCDC90 family.

Its subcellular location is the mitochondrion. The protein resides in the membrane. The polypeptide is Protein fmp32, mitochondrial (fmp32) (Schizosaccharomyces pombe (strain 972 / ATCC 24843) (Fission yeast)).